A 187-amino-acid chain; its full sequence is Phosphatidylethanolamine-binding protein 1 (187 aa).

At alanine 2 the chain carries N-acetylalanine; in peptide hippocampal cholinergic neurostimulating. Phosphoserine is present on residues serine 6 and serine 13. The residue at position 42 (threonine 42) is a Phosphothreonine. Phosphoserine occurs at positions 52, 54, 98, and 153. Positions 93-134 (KGNDISSGTVLSEYVGSGPPKDTGLHRYVWLVYEQEQPLNCD) are interaction with RAF1.

This sequence belongs to the phosphatidylethanolamine-binding protein family. In terms of assembly, has a tendency to form dimers by disulfide cross-linking. Interacts with RAF1 and this interaction is enhanced if RAF1 is phosphorylated on residues 'Ser-338', 'Ser-339', 'Tyr-340' and 'Tyr-341'. Interacts with ALOX15; in response to IL13/interleukin-13, prevents the interaction of PEBP1 with RAF1 to activate the ERK signaling cascade. In terms of tissue distribution, major component of epididymal secretions and sperm plasma membranes. It is present in cytosols from a variety of other tissues. Highly expressed in brain.

Its subcellular location is the cytoplasm. It is found in the membrane. Binds ATP, opioids and phosphatidylethanolamine. Has lower affinity for phosphatidylinositol and phosphatidylcholine. Serine protease inhibitor which inhibits thrombin, neuropsin and chymotrypsin but not trypsin, tissue type plasminogen activator and elastase. Inhibits the kinase activity of RAF1 by inhibiting its activation and by dissociating the RAF1/MEK complex and acting as a competitive inhibitor of MEK phosphorylation. Functionally, HCNP may be involved in the function of the presynaptic cholinergic neurons of the central nervous system. HCNP increases the production of choline acetyltransferase but not acetylcholinesterase. Seems to be mediated by a specific receptor. In Rattus norvegicus (Rat), this protein is Phosphatidylethanolamine-binding protein 1 (Pebp1).